The chain runs to 323 residues: MVCCGPGRMLLGWAGLLVLAALCLLQVPGAQAAACEPVRIPLCKSLPWNMTKMPNHLHHSTQANAILAMEQFEGLLGTHCSPDLLFFLCAMYAPICTIDFQHEPIKPCKSVCERARQGCEPILIKYRHSWPESLACDELPVYDRGVCISPEAIVTADGADFPMDSSTGHCRGASSERCKCKPVRATQKTYFRNNYNYVIRAKVKEVKMKCHDVTAVVEVKEILKASLVNIPRDTVNLYTTSGCLCPPLTVNEEYVIMGYEDEERSRLLLVEGSIAEKWKDRLGKKVKRWDMKLRHLGLGKTDASDSTQNQKSGRNSNPRPARS.

An N-terminal signal peptide occupies residues 1–32; it reads MVCCGPGRMLLGWAGLLVLAALCLLQVPGAQA. The region spanning 33–150 is the FZ domain; that stretch reads AACEPVRIPL…VYDRGVCISP (118 aa). 5 disulfide bridges follow: Cys35–Cys96, Cys43–Cys89, Cys80–Cys119, Cys108–Cys147, and Cys112–Cys136. Asn49 is a glycosylation site (N-linked (GlcNAc...) asparagine). Residues 178-298 form the NTR domain; that stretch reads CKCKPVRATQ…WDMKLRHLGL (121 aa). The tract at residues 299 to 323 is disordered; sequence GKTDASDSTQNQKSGRNSNPRPARS. Over residues 304-323 the composition is skewed to polar residues; the sequence is SDSTQNQKSGRNSNPRPARS.

This sequence belongs to the secreted frizzled-related protein (sFRP) family. In terms of assembly, interacts with MYOC. In terms of tissue distribution, expressed in kidney, brain, testis. Weak expression in spleen and heart.

It is found in the secreted. Soluble frizzled-related proteins (sFRPS) function as modulators of Wnt signaling through direct interaction with Wnts. They have a role in regulating cell growth and differentiation in specific cell types. SFRP3/FRZB appears to be involved in limb skeletogenesis. Antagonist of Wnt8 signaling. Regulates chondrocyte maturation and long bone development. In Mus musculus (Mouse), this protein is Secreted frizzled-related protein 3 (Frzb).